Consider the following 375-residue polypeptide: Succinyl-diaminopimelate desuccinylase (375 aa).

A Zn(2+)-binding site is contributed by His-66. Asp-68 is an active-site residue. Asp-99 serves as a coordination point for Zn(2+). The active-site Proton acceptor is the Glu-133. The Zn(2+) site is built by Glu-134, Glu-162, and His-348.

It belongs to the peptidase M20A family. DapE subfamily. In terms of assembly, homodimer. It depends on Zn(2+) as a cofactor. The cofactor is Co(2+).

The catalysed reaction is N-succinyl-(2S,6S)-2,6-diaminopimelate + H2O = (2S,6S)-2,6-diaminopimelate + succinate. The protein operates within amino-acid biosynthesis; L-lysine biosynthesis via DAP pathway; LL-2,6-diaminopimelate from (S)-tetrahydrodipicolinate (succinylase route): step 3/3. In terms of biological role, catalyzes the hydrolysis of N-succinyl-L,L-diaminopimelic acid (SDAP), forming succinate and LL-2,6-diaminopimelate (DAP), an intermediate involved in the bacterial biosynthesis of lysine and meso-diaminopimelic acid, an essential component of bacterial cell walls. In Escherichia coli O17:K52:H18 (strain UMN026 / ExPEC), this protein is Succinyl-diaminopimelate desuccinylase.